Here is a 1360-residue protein sequence, read N- to C-terminus: TRAF2 and NCK-interacting protein kinase (1360 aa).

The Protein kinase domain occupies 25–289 (FELVELVGNG…TEQLMKHPFI (265 aa)). Residues 31-39 (VGNGTYGQV) and Lys-54 each bind ATP. Asp-153 acts as the Proton acceptor in catalysis. Thr-187 carries the phosphothreonine modification. Disordered regions lie at residues 284–347 (MKHP…LPGE), 398–440 (QKEQ…RRRA), and 539–589 (ERSR…RPVD). The segment covering 288–307 (FIRDQPNERQVRIQLKDHID) has biased composition (basic and acidic residues). Residues 290–1047 (RDQPNERQVR…EIRKYKKRFN (758 aa)) form a mediates interaction with NEDD4 region. Acidic residues predominate over residues 317 to 335 (DETEYEYSGSEEEEEENDS). Residues Ser-324 and Ser-326 each carry the phosphoserine modification. Ser-560 and Ser-570 each carry phosphoserine. Thr-581 carries the post-translational modification Phosphothreonine. Phosphoserine is present on residues Ser-600, Ser-608, Ser-610, and Ser-640. Disordered regions lie at residues 601 to 801 (QGPA…KAID), 814 to 878 (LRIE…YNVG), 908 to 927 (TSGEKKRSGHSDSNGFAGHI), and 933 to 998 (VQQS…ESSA). The segment covering 652 to 669 (RIEKFDRSSWLRQEEDIP) has biased composition (basic and acidic residues). Phosphoserine occurs at positions 678, 680, 688, 701, 707, 720, 764, 766, and 769. Low complexity predominate over residues 720–755 (SPLQRTSSGSSSSSSTPSSQPSSQGGSQPGSQAGSS). Basic and acidic residues-rich tracts occupy residues 775-789 (EPAKVKPEESRDITR) and 814-827 (LRIEETNRPMKKVT). Positions 834–847 (EESESSEEEEEDGE) are enriched in acidic residues. The segment covering 908–917 (TSGEKKRSGH) has biased composition (basic and acidic residues). At Ser-959 the chain carries Phosphoserine. The span at 987-996 (TDEDEEDEES) shows a compositional bias: acidic residues. The region spanning 1047–1334 (NSEILCAALW…KFLCERNDKV (288 aa)) is the CNH domain.

Belongs to the protein kinase superfamily. STE Ser/Thr protein kinase family. STE20 subfamily. In terms of assembly, interacts (via the CNH domain) with RAP2A (GTP-bound form preferentially); the interaction is direct and required for the activation of TNIK by RAP2A. Interacts with NEDD4; recruits RAP2A to NEDD4. Interacts with TRAF2 and NCK. Interacts with TCF7L2/TCF4 and CTNNB1; the interaction is direct. Interacts with TANC1. Autophosphorylated. Autophosphorylation is activated by RAP2A and induces association to the cytoskeletal fraction. Expressed ubiquitously. Highest levels observed in heart, brain and skeletal muscle. Expressed in normal colonic epithelia and colorectal cancer tissues.

Its subcellular location is the nucleus. The protein resides in the cytoplasm. The protein localises to the recycling endosome. It is found in the cytoskeleton. The catalysed reaction is L-seryl-[protein] + ATP = O-phospho-L-seryl-[protein] + ADP + H(+). The enzyme catalyses L-threonyl-[protein] + ATP = O-phospho-L-threonyl-[protein] + ADP + H(+). Its function is as follows. Serine/threonine kinase that acts as an essential activator of the Wnt signaling pathway. Recruited to promoters of Wnt target genes and required to activate their expression. May act by phosphorylating TCF4/TCF7L2. Appears to act upstream of the JUN N-terminal pathway. May play a role in the response to environmental stress. Part of a signaling complex composed of NEDD4, RAP2A and TNIK which regulates neuronal dendrite extension and arborization during development. More generally, it may play a role in cytoskeletal rearrangements and regulate cell spreading. Phosphorylates SMAD1 on Thr-322. Activator of the Hippo signaling pathway which plays a pivotal role in organ size control and tumor suppression by restricting proliferation and promoting apoptosis. MAP4Ks act in parallel to and are partially redundant with STK3/MST2 and STK4/MST2 in the phosphorylation and activation of LATS1/2, and establish MAP4Ks as components of the expanded Hippo pathway. The protein is TRAF2 and NCK-interacting protein kinase of Homo sapiens (Human).